The chain runs to 22 residues: Caerin-3.5 (22 aa).

Position 22 is a lysine amide (Lys-22).

As to expression, expressed by the skin dorsal glands.

It is found in the secreted. Shows significant activity against Gram-positive organisms, but is less effective against Gram-negative organisms. The sequence is that of Caerin-3.5 from Ranoidea gracilenta (Dainty green tree frog).